Here is a 413-residue protein sequence, read N- to C-terminus: Gamma-DL-glutamyl hydrolase (413 aa).

The N-terminal stretch at 1–32 is a signal peptide; the sequence is MNTLANWKKFLLVAVIICFLVPIMTKAEIAEA. 3 NlpC/P60 domains span residues 33–159, 163–287, and 291–413; these read DTSS…RRIA, ATAD…RRFD, and IPKE…IRVQ. Cys194 acts as the Nucleophile in catalysis. Catalysis depends on His247, which acts as the Proton acceptor. Gln259 is an active-site residue.

The protein belongs to the peptidase C40 family.

The protein localises to the secreted. It is found in the cell wall. Inhibited by pretreatment with 1 mM 4-(hydroxymercuri)benzoate, a sulfhydryl inhibitor. Cleaves, in an endo-type manner, the gamma-glutamyl bond between D-glutamate and L-glutamate of poly-gamma-glutamate (PGA). This Bacillus subtilis (strain 168) protein is Gamma-DL-glutamyl hydrolase (pgdS).